The following is a 107-amino-acid chain: Class I hydrophobin hgfI (107 aa).

Positions 1–24 are cleaved as a signal peptide; it reads MFSKLAIFATAAFAVLAAATPVRR. Intrachain disulfides connect C27-C88, C34-C82, C35-C68, and C89-C102.

It belongs to the fungal hydrophobin family. As to quaternary structure, self-assembles to form functional amyloid fibrils called rodlets with a length range 100-150 nm. Self-assembly into fibrillar rodlets occurs spontaneously at hydrophobic:hydrophilic interfaces and the rodlets further associate laterally to form amphipathic monolayers. As to expression, only weekly expressed in hyphae cultured in liquid medium.

The protein resides in the secreted. It localises to the cell wall. Aerial growth, conidiation, and dispersal of filamentous fungi in the environment rely upon a capability of their secreting small amphipathic proteins called hydrophobins (HPBs) with low sequence identity. Class I can self-assemble into an outermost layer of rodlet bundles on aerial cell surfaces, conferring cellular hydrophobicity that supports fungal growth, development and dispersal; whereas Class II form highly ordered films at water-air interfaces through intermolecular interactions but contribute nothing to the rodlet structure. HgfI is a class I hydrophobin that is involved in cell surface hydrophobicity and lowers the surface tension of water and change the nature of the surfaces to which it adsorbs. This Grifola frondosa (Maitake) protein is Class I hydrophobin hgfI.